The following is a 118-amino-acid chain: Large ribosomal subunit protein bL20 (118 aa).

Belongs to the bacterial ribosomal protein bL20 family.

In terms of biological role, binds directly to 23S ribosomal RNA and is necessary for the in vitro assembly process of the 50S ribosomal subunit. It is not involved in the protein synthesizing functions of that subunit. The polypeptide is Large ribosomal subunit protein bL20 (Salmonella arizonae (strain ATCC BAA-731 / CDC346-86 / RSK2980)).